The chain runs to 3902 residues: Mediator of RNA polymerase II transcription subunit 12 (3902 aa).

Disordered regions lie at residues 414–576 (ESLT…EELP), 619–674 (FEPF…NPKL), 694–940 (AFDP…LEAL), 977–1029 (VVEK…PEPP), 1812–1831 (TSHK…TETR), 2463–2675 (TVEP…NRKQ), 2719–2771 (AGAS…SSSM), 2876–3151 (RIME…PEMQ), 3195–3549 (LQAG…SSNQ), and 3563–3902 (AGLN…QQQY). The segment covering 420–430 (EPEEDPEEGPE) has biased composition (acidic residues). The span at 709-721 (PTPPEAPPPPPPV) shows a compositional bias: pro residues. Composition is skewed to basic and acidic residues over residues 740–802 (EDGK…EHLN), 912–928 (KAGD…KKPD), 977–1004 (VVEK…EKLP), and 1018–1027 (KTPEKPKTPE). Over residues 1812–1824 (TSHKTKDVKRKSA) the composition is skewed to basic residues. The tract at residues 2409 to 3902 (QTTRLDKVAK…MGQFPNQQQY (1494 aa)) is required for nuclear localization. Residues 2474–2547 (AAVKKPEEET…VTAKDTEKDT (74 aa)) show a composition bias toward basic and acidic residues. Residues 2480 to 2526 (EEETAEKKKDEAKKADEKTTKADDEKKKDETADAKKDNEKQKEEKDK) are a coiled coil. 3 stretches are compositionally biased toward low complexity: residues 2548–2566 (AAPT…AAPD), 2614–2632 (SRAN…SSTT), and 2734–2748 (PHPG…QHQG). Over residues 2876-2979 (RIMEEQRILR…ERLERERVAR (104 aa)) the composition is skewed to basic and acidic residues. 4 stretches are compositionally biased toward low complexity: residues 2980–3001 (EALA…QAQQ), 3010–3143 (QQQR…QRNP), 3196–3205 (QAGQAAGQQQ), and 3226–3236 (PQQQQQQPQQP). Polar residues predominate over residues 3237-3248 (GTSQIPNTTPTR). Composition is skewed to low complexity over residues 3250–3275 (ANPM…GQPG), 3284–3295 (GQQQQNQFQRQG), and 3317–3389 (GQQQ…FGRQ). The span at 3391–3409 (APNQENFQQQPGFNQNAAG) shows a compositional bias: polar residues. Composition is skewed to low complexity over residues 3410–3446 (QNYQ…QQQN), 3454–3539 (QSQQ…QGNQ), and 3570–3619 (SSGN…RPGM). Residues 3620–3649 (GQQGMGQQGMGQQGGMGQSGRGQPGMGGQS) show a composition bias toward gly residues. Low complexity-rich tracts occupy residues 3663-3700 (MGQP…QQQH), 3710-3742 (QQGR…QQAQ), and 3760-3830 (QQQQ…HRGQ). Gly residues predominate over residues 3831-3841 (GQQGHGMGGAG). A compositionally biased stretch (low complexity) spans 3842 to 3888 (QQHQQVPQQQQNQYFQPQQQQDQRMQQQPGGQQQQQQGQSGQQQNNQ). Polar residues predominate over residues 3889–3902 (HYNNMGQFPNQQQY).

This sequence belongs to the Mediator complex subunit 12 family. In terms of assembly, component of the Mediator complex.

It is found in the nucleus. In terms of biological role, component of the Mediator complex, a coactivator involved in regulated gene transcription of nearly all RNA polymerase II-dependent genes. Mediator functions as a bridge to convey information from gene-specific regulatory proteins to the basal RNA polymerase II transcription machinery. Mediator is recruited to promoters by direct interactions with regulatory proteins and serves as a scaffold for the assembly of a functional preinitiation complex with RNA polymerase II and the general transcription factors. This chain is Mediator of RNA polymerase II transcription subunit 12 (dpy-22), found in Caenorhabditis briggsae.